The chain runs to 160 residues: SsrA-binding protein (160 aa).

This sequence belongs to the SmpB family.

It localises to the cytoplasm. Functionally, required for rescue of stalled ribosomes mediated by trans-translation. Binds to transfer-messenger RNA (tmRNA), required for stable association of tmRNA with ribosomes. tmRNA and SmpB together mimic tRNA shape, replacing the anticodon stem-loop with SmpB. tmRNA is encoded by the ssrA gene; the 2 termini fold to resemble tRNA(Ala) and it encodes a 'tag peptide', a short internal open reading frame. During trans-translation Ala-aminoacylated tmRNA acts like a tRNA, entering the A-site of stalled ribosomes, displacing the stalled mRNA. The ribosome then switches to translate the ORF on the tmRNA; the nascent peptide is terminated with the 'tag peptide' encoded by the tmRNA and targeted for degradation. The ribosome is freed to recommence translation, which seems to be the essential function of trans-translation. The protein is SsrA-binding protein of Pectobacterium atrosepticum (strain SCRI 1043 / ATCC BAA-672) (Erwinia carotovora subsp. atroseptica).